A 227-amino-acid chain; its full sequence is Cytochrome c oxidase subunit 2 (227 aa).

Residues 1–14 are Mitochondrial intermembrane-facing; that stretch reads MAYPFQLGLQDATS. A helical transmembrane segment spans residues 15-45; sequence PIMEELLHFHDHTLMIVFLISSLVLYIITLM. At 46-59 the chain is on the mitochondrial matrix side; it reads LTTKLTHTSTMDAQ. The chain crosses the membrane as a helical span at residues 60–87; sequence EVETVWTILPAIILILIALPSLRILYMM. Topologically, residues 88–227 are mitochondrial intermembrane; sequence DEINNPSLTV…YFETWSALMV (140 aa). Histidine 161, cysteine 196, glutamate 198, cysteine 200, histidine 204, and methionine 207 together coordinate Cu cation. Glutamate 198 is a binding site for Mg(2+). The residue at position 218 (tyrosine 218) is a Phosphotyrosine.

Belongs to the cytochrome c oxidase subunit 2 family. Component of the cytochrome c oxidase (complex IV, CIV), a multisubunit enzyme composed of 14 subunits. The complex is composed of a catalytic core of 3 subunits MT-CO1, MT-CO2 and MT-CO3, encoded in the mitochondrial DNA, and 11 supernumerary subunits COX4I, COX5A, COX5B, COX6A, COX6B, COX6C, COX7A, COX7B, COX7C, COX8 and NDUFA4, which are encoded in the nuclear genome. The complex exists as a monomer or a dimer and forms supercomplexes (SCs) in the inner mitochondrial membrane with NADH-ubiquinone oxidoreductase (complex I, CI) and ubiquinol-cytochrome c oxidoreductase (cytochrome b-c1 complex, complex III, CIII), resulting in different assemblies (supercomplex SCI(1)III(2)IV(1) and megacomplex MCI(2)III(2)IV(2)). Found in a complex with TMEM177, COA6, COX18, COX20, SCO1 and SCO2. Interacts with TMEM177 in a COX20-dependent manner. Interacts with COX20. Interacts with COX16. The cofactor is Cu cation.

It is found in the mitochondrion inner membrane. It carries out the reaction 4 Fe(II)-[cytochrome c] + O2 + 8 H(+)(in) = 4 Fe(III)-[cytochrome c] + 2 H2O + 4 H(+)(out). In terms of biological role, component of the cytochrome c oxidase, the last enzyme in the mitochondrial electron transport chain which drives oxidative phosphorylation. The respiratory chain contains 3 multisubunit complexes succinate dehydrogenase (complex II, CII), ubiquinol-cytochrome c oxidoreductase (cytochrome b-c1 complex, complex III, CIII) and cytochrome c oxidase (complex IV, CIV), that cooperate to transfer electrons derived from NADH and succinate to molecular oxygen, creating an electrochemical gradient over the inner membrane that drives transmembrane transport and the ATP synthase. Cytochrome c oxidase is the component of the respiratory chain that catalyzes the reduction of oxygen to water. Electrons originating from reduced cytochrome c in the intermembrane space (IMS) are transferred via the dinuclear copper A center (CU(A)) of subunit 2 and heme A of subunit 1 to the active site in subunit 1, a binuclear center (BNC) formed by heme A3 and copper B (CU(B)). The BNC reduces molecular oxygen to 2 water molecules using 4 electrons from cytochrome c in the IMS and 4 protons from the mitochondrial matrix. The chain is Cytochrome c oxidase subunit 2 (MT-CO2) from Vulpes macrotis (Kit fox).